Here is a 154-residue protein sequence, read N- to C-terminus: Ribonuclease H (154 aa).

The RNase H type-1 domain occupies 1 to 142 (MQKQIEIFTD…CDELAKKGAE (142 aa)). Asp-10, Glu-48, Asp-70, and Asp-134 together coordinate Mg(2+).

This sequence belongs to the RNase H family. As to quaternary structure, monomer. It depends on Mg(2+) as a cofactor.

It is found in the cytoplasm. It catalyses the reaction Endonucleolytic cleavage to 5'-phosphomonoester.. Endonuclease that specifically degrades the RNA of RNA-DNA hybrids. This Haemophilus influenzae (strain 86-028NP) protein is Ribonuclease H.